We begin with the raw amino-acid sequence, 312 residues long: Ribosomal RNA small subunit methyltransferase H (312 aa).

S-adenosyl-L-methionine is bound by residues 35-37 (GGH), Asp54, Phe81, Asp100, and Gln107.

It belongs to the methyltransferase superfamily. RsmH family.

It is found in the cytoplasm. It catalyses the reaction cytidine(1402) in 16S rRNA + S-adenosyl-L-methionine = N(4)-methylcytidine(1402) in 16S rRNA + S-adenosyl-L-homocysteine + H(+). In terms of biological role, specifically methylates the N4 position of cytidine in position 1402 (C1402) of 16S rRNA. This is Ribosomal RNA small subunit methyltransferase H from Campylobacter jejuni subsp. jejuni serotype O:2 (strain ATCC 700819 / NCTC 11168).